Consider the following 201-residue polypeptide: Urease accessory protein UreG (201 aa).

Residue 11–18 (GPVGSGKT) coordinates GTP.

It belongs to the SIMIBI class G3E GTPase family. UreG subfamily. As to quaternary structure, homodimer. UreD, UreF and UreG form a complex that acts as a GTP-hydrolysis-dependent molecular chaperone, activating the urease apoprotein by helping to assemble the nickel containing metallocenter of UreC. The UreE protein probably delivers the nickel.

The protein resides in the cytoplasm. Functionally, facilitates the functional incorporation of the urease nickel metallocenter. This process requires GTP hydrolysis, probably effectuated by UreG. The polypeptide is Urease accessory protein UreG (Synechococcus sp. (strain CC9902)).